The following is a 75-amino-acid chain: Small, acid-soluble spore protein Tlp (75 aa).

The protein belongs to the Tlp family.

The protein localises to the spore core. This chain is Small, acid-soluble spore protein Tlp, found in Geobacillus kaustophilus (strain HTA426).